The sequence spans 295 residues: NAD kinase (295 aa).

Asp73 acts as the Proton acceptor in catalysis. NAD(+)-binding positions include 73–74 (DG), Arg78, 146–147 (NE), Lys157, Arg174, Asp176, and 187–192 (TAYSLS).

Belongs to the NAD kinase family. It depends on a divalent metal cation as a cofactor.

Its subcellular location is the cytoplasm. It catalyses the reaction NAD(+) + ATP = ADP + NADP(+) + H(+). In terms of biological role, involved in the regulation of the intracellular balance of NAD and NADP, and is a key enzyme in the biosynthesis of NADP. Catalyzes specifically the phosphorylation on 2'-hydroxyl of the adenosine moiety of NAD to yield NADP. In Wigglesworthia glossinidia brevipalpis, this protein is NAD kinase.